A 290-amino-acid polypeptide reads, in one-letter code: Acetyl-coenzyme A carboxylase carboxyl transferase subunit beta (290 aa).

Residues 27-290 (LWVKCPSCEA…LQRQPADALA (264 aa)) enclose the CoA carboxyltransferase N-terminal domain. Positions 31, 34, 50, and 53 each coordinate Zn(2+). The segment at 31–53 (CPSCEAVLYRNDVDANLHVCPKC) adopts a C4-type zinc-finger fold.

This sequence belongs to the AccD/PCCB family. As to quaternary structure, acetyl-CoA carboxylase is a heterohexamer composed of biotin carboxyl carrier protein (AccB), biotin carboxylase (AccC) and two subunits each of ACCase subunit alpha (AccA) and ACCase subunit beta (AccD). Requires Zn(2+) as cofactor.

It is found in the cytoplasm. The catalysed reaction is N(6)-carboxybiotinyl-L-lysyl-[protein] + acetyl-CoA = N(6)-biotinyl-L-lysyl-[protein] + malonyl-CoA. The protein operates within lipid metabolism; malonyl-CoA biosynthesis; malonyl-CoA from acetyl-CoA: step 1/1. In terms of biological role, component of the acetyl coenzyme A carboxylase (ACC) complex. Biotin carboxylase (BC) catalyzes the carboxylation of biotin on its carrier protein (BCCP) and then the CO(2) group is transferred by the transcarboxylase to acetyl-CoA to form malonyl-CoA. This chain is Acetyl-coenzyme A carboxylase carboxyl transferase subunit beta, found in Burkholderia multivorans (strain ATCC 17616 / 249).